Here is a 471-residue protein sequence, read N- to C-terminus: Sulfate adenylyltransferase subunit 1 (471 aa).

The tr-type G domain maps to 24-240; that stretch reads KSLLRFLTCG…ESADVERELE (217 aa). The interval 33–40 is G1; that stretch reads GSVDDGKS. 33–40 contacts GTP; the sequence is GSVDDGKS. The G2 stretch occupies residues 91–95; it reads GITID. A G3 region spans residues 112-115; sequence DTPG. Residues 112–116 and 167–170 each bind GTP; these read DTPGH and NKMD. Residues 167–170 form a G4 region; that stretch reads NKMD. The interval 204–206 is G5; sequence SAL.

This sequence belongs to the TRAFAC class translation factor GTPase superfamily. Classic translation factor GTPase family. CysN/NodQ subfamily. As to quaternary structure, heterodimer composed of CysD, the smaller subunit, and CysN.

It carries out the reaction sulfate + ATP + H(+) = adenosine 5'-phosphosulfate + diphosphate. The protein operates within sulfur metabolism; hydrogen sulfide biosynthesis; sulfite from sulfate: step 1/3. With CysD forms the ATP sulfurylase (ATPS) that catalyzes the adenylation of sulfate producing adenosine 5'-phosphosulfate (APS) and diphosphate, the first enzymatic step in sulfur assimilation pathway. APS synthesis involves the formation of a high-energy phosphoric-sulfuric acid anhydride bond driven by GTP hydrolysis by CysN coupled to ATP hydrolysis by CysD. This Aeromonas salmonicida (strain A449) protein is Sulfate adenylyltransferase subunit 1.